Consider the following 575-residue polypeptide: Phosphoenolpyruvate-protein phosphotransferase (575 aa).

The active-site Tele-phosphohistidine intermediate is histidine 191. Phosphoenolpyruvate-binding residues include arginine 298 and arginine 334. 2 residues coordinate Mg(2+): glutamate 435 and aspartate 459. Residues 458–459 (ND) and arginine 469 contribute to the phosphoenolpyruvate site. Cysteine 506 acts as the Proton donor in catalysis.

The protein belongs to the PEP-utilizing enzyme family. Homodimer. It depends on Mg(2+) as a cofactor.

The protein resides in the cytoplasm. It catalyses the reaction L-histidyl-[protein] + phosphoenolpyruvate = N(pros)-phospho-L-histidyl-[protein] + pyruvate. Functionally, general (non sugar-specific) component of the phosphoenolpyruvate-dependent sugar phosphotransferase system (sugar PTS). This major carbohydrate active-transport system catalyzes the phosphorylation of incoming sugar substrates concomitantly with their translocation across the cell membrane. Enzyme I transfers the phosphoryl group from phosphoenolpyruvate (PEP) to the phosphoryl carrier protein (HPr). In Lactococcus lactis subsp. cremoris (Streptococcus cremoris), this protein is Phosphoenolpyruvate-protein phosphotransferase (ptsI).